We begin with the raw amino-acid sequence, 222 residues long: uncharacterized protein (222 aa).

Positions 142–222 (ARRGGCVHPP…LPDPPSAGHL (81 aa)) are disordered. A compositionally biased stretch (low complexity) spans 160–169 (QSRSISSRRA). Positions 182–196 (PRRRPHRHRTRPQTR) are enriched in basic residues.

This sequence belongs to the Rv1128c/1148c/1588c/1702c/1945/3466 family.

This is an uncharacterized protein from Mycobacterium tuberculosis (strain CDC 1551 / Oshkosh).